Consider the following 271-residue polypeptide: Methylthioribulose-1-phosphate dehydratase (271 aa).

Position 123 (Cys123) interacts with substrate. Positions 141 and 143 each coordinate Zn(2+). Glu166 functions as the Proton donor/acceptor in the catalytic mechanism. A Zn(2+)-binding site is contributed by His231.

The protein belongs to the aldolase class II family. MtnB subfamily. The cofactor is Zn(2+).

It localises to the cytoplasm. It catalyses the reaction 5-(methylsulfanyl)-D-ribulose 1-phosphate = 5-methylsulfanyl-2,3-dioxopentyl phosphate + H2O. Its pathway is amino-acid biosynthesis; L-methionine biosynthesis via salvage pathway; L-methionine from S-methyl-5-thio-alpha-D-ribose 1-phosphate: step 2/6. In terms of biological role, catalyzes the dehydration of methylthioribulose-1-phosphate (MTRu-1-P) into 2,3-diketo-5-methylthiopentyl-1-phosphate (DK-MTP-1-P). The polypeptide is Methylthioribulose-1-phosphate dehydratase (Candida dubliniensis (strain CD36 / ATCC MYA-646 / CBS 7987 / NCPF 3949 / NRRL Y-17841) (Yeast)).